Consider the following 526-residue polypeptide: Importin subunit alpha-1a (526 aa).

One can recognise an IBB domain in the interval 1 to 58 (MSLRPSERVEVRRNRYKVAVDAEEGRRRREDNMVEIRKSRREESLLKKRREGLQAQAP). ARM repeat units lie at residues 105 to 145 (SPPI…NIAS), 148 to 187 (SENT…NVAG), 190 to 230 (PKCR…NFCR), 232 to 271 (KPQP…YLSD), 274 to 313 (NDKI…NIVT), 316 to 356 (DAQT…NITA), 359 to 398 (KDQI…NATS), and 402 to 441 (HDQI…NILK).

The protein belongs to the importin alpha family. Forms a complex with importin subunit beta-1. The whole complex, most stable and composed of importin alpha, importin beta and NLS substrate, is referred to as PTAC or pore targeting complex. Interacts with mungbean yellow mosaic virus capsid protein. In terms of tissue distribution, highly expressed in callus, followed by root and etiolated leaf. Low expression in green leaf.

The protein localises to the cytoplasm. It is found in the perinuclear region. Functions in nuclear protein import. Binds specifically and directly to substrates containing either a simple or bipartite NLS motif. Promotes docking of import substrates to the nuclear envelope. The protein is Importin subunit alpha-1a of Oryza sativa subsp. japonica (Rice).